We begin with the raw amino-acid sequence, 428 residues long: C4-dicarboxylate transport protein (428 aa).

Transmembrane regions (helical) follow at residues 8-28, 44-64, 76-96, 142-162, 184-204, 222-242, 326-346, and 352-372; these read SLYF…HFYP, LIKM…IAGM, VALL…LIIV, IGAF…LFGF, VIFG…FGAM, LIIC…GSIA, IFHQ…AAGV, and IVLA…LALI.

Belongs to the dicarboxylate/amino acid:cation symporter (DAACS) (TC 2.A.23) family.

The protein localises to the cell inner membrane. Responsible for the transport of dicarboxylates such as succinate, fumarate, and malate from the periplasm across the membrane. This is C4-dicarboxylate transport protein from Enterobacter sp. (strain 638).